The primary structure comprises 590 residues: Glutamine--fructose-6-phosphate aminotransferase [isomerizing] (590 aa).

Cysteine 2 acts as the Nucleophile; for GATase activity in catalysis. One can recognise a Glutamine amidotransferase type-2 domain in the interval 2–219; that stretch reads CGIVACILKD…DGEMVILDGD (218 aa). 2 SIS domains span residues 277 to 415 and 438 to 580; these read VVEE…PELM and LAAT…PDKP. Lysine 585 serves as the catalytic For Fru-6P isomerization activity.

Homodimer.

The protein resides in the cytoplasm. The enzyme catalyses D-fructose 6-phosphate + L-glutamine = D-glucosamine 6-phosphate + L-glutamate. Its function is as follows. Catalyzes the first step in hexosamine metabolism, converting fructose-6P into glucosamine-6P using glutamine as a nitrogen source. The sequence is that of Glutamine--fructose-6-phosphate aminotransferase [isomerizing] from Methanothermobacter thermautotrophicus (strain ATCC 29096 / DSM 1053 / JCM 10044 / NBRC 100330 / Delta H) (Methanobacterium thermoautotrophicum).